The primary structure comprises 662 residues: DNA ligase (662 aa).

Residues 31–35 (DKDYD) and 79–80 (SL) contribute to the NAD(+) site. Residue Lys121 is the N6-AMP-lysine intermediate of the active site. The NAD(+) site is built by Arg143, Glu177, and Lys313. Residues Cys406, Cys409, Cys422, and Cys428 each coordinate Zn(2+). The BRCT domain occupies 586–662 (VLESPFMGKT…LSEEEFENMI (77 aa)).

The protein belongs to the NAD-dependent DNA ligase family. LigA subfamily. Requires Mg(2+) as cofactor. Mn(2+) is required as a cofactor.

It carries out the reaction NAD(+) + (deoxyribonucleotide)n-3'-hydroxyl + 5'-phospho-(deoxyribonucleotide)m = (deoxyribonucleotide)n+m + AMP + beta-nicotinamide D-nucleotide.. Functionally, DNA ligase that catalyzes the formation of phosphodiester linkages between 5'-phosphoryl and 3'-hydroxyl groups in double-stranded DNA using NAD as a coenzyme and as the energy source for the reaction. It is essential for DNA replication and repair of damaged DNA. The sequence is that of DNA ligase from Clostridium perfringens (strain SM101 / Type A).